The sequence spans 625 residues: RalA-binding protein 1 (625 aa).

Basic and acidic residues-rich tracts occupy residues 1–11 (MDFDSPEEKEF) and 20–60 (ADAK…KDRG). The segment at 1-172 (MDFDSPEEKE…SKQLSQQQDD (172 aa)) is disordered. Phosphoserine occurs at positions 68 and 69. Residues 94 to 157 (KSKEKREKSR…EKDKKADKKD (64 aa)) show a composition bias toward basic and acidic residues. One can recognise a Rho-GAP domain in the interval 191 to 385 (VSLATERSRC…PLTSTSPKLP (195 aa)). The disordered stretch occupies residues 443–500 (QEKTAEEVDNSSSAPPAVASEDTTDSKPAGTPAVSTNNSISQEEPKTDTLTPKDAPND). Polar residues predominate over residues 475 to 484 (AVSTNNSISQ).

In terms of assembly, interacts with CycB and numb.

Its function is as follows. Participates in receptor endocytosis during interphase, is also involved in mitotic processes when endocytosis is switched off. The protein is RalA-binding protein 1 of Drosophila melanogaster (Fruit fly).